The following is a 626-amino-acid chain: MIFLTTLPLFWIMISASRGGHWGAWMPSSISAFEGTCVSIPCRFDFPDELRPAVVHGVWYFNSPYPKNYPPVVFKSRTQVVHESFQGRSRLLGDLGLRNCTLLLSTLSPELGGKYYFRGDLGGYNQYTFSEHSVLDIINTPNIVVPPEVVAGTEVEVSCMVPDNCPELRPELSWLGHEGLGEPTVLGRLREDEGTWVQVSLLHFVPTREANGHRLGCQAAFPNTTLQFEGYASLDVKYPPVIVEMNSSVEAIEGSHVSLLCGADSNPPPLLTWMRDGMVLREAVAESLYLDLEEVTPAEDGIYACLAENAYGQDNRTVELSVMYAPWKPTVNGTVVAVEGETVSILCSTQSNPDPILTIFKEKQILATVIYESQLQLELPAVTPEDDGEYWCVAENQYGQRATAFNLSVEFAPIILLESHCAAARDTVQCLCVVKSNPEPSVAFELPSRNVTVNETEREFVYSERSGLLLTSILTLRGQAQAPPRVICTSRNLYGTQSLELPFQGAHRLMWAKIGPVGAVVAFAILIAIVCYITQTRRKKNVTESPSFSAGDNPHVLYSPEFRISGAPDKYESEKRLGSERRLLGLRGEPPELDLSYSHSDLGKRPTKDSYTLTEELAEYAEIRVK.

Positions methionine 1–glycine 19 are cleaved as a signal peptide. The segment at glycine 20–alanine 325 is interaction with RTN4R and RTN4RL2. Residues glycine 20–proline 516 lie on the Extracellular side of the membrane. An Ig-like V-type domain is found at tryptophan 22 to aspartate 120. Intrachain disulfides connect cysteine 37-cysteine 165, cysteine 42-cysteine 100, and cysteine 159-cysteine 217. Tyrosine 65–lysine 67 contacts a ganglioside GT1b (d18:1(4E)). N-linked (GlcNAc...) asparagine glycosylation occurs at asparagine 99. A ganglioside GT1b (d18:1(4E))-binding positions include arginine 118 and tyrosine 124 to threonine 128. 4 Ig-like C2-type domains span residues asparagine 139–lysine 237, valine 241–alanine 325, tryptophan 327–alanine 412, and proline 413–arginine 508. Residues asparagine 223 and asparagine 246 are each glycosylated (N-linked (GlcNAc...) asparagine). The cysteines at positions 261 and 305 are disulfide-linked. Residues asparagine 315 and asparagine 332 are each glycosylated (N-linked (GlcNAc...) asparagine). A disulfide bond links cysteine 347 and cysteine 392. Residue asparagine 406 is glycosylated (N-linked (GlcNAc...) asparagine). Cystine bridges form between cysteine 421–cysteine 430 and cysteine 432–cysteine 488. 2 N-linked (GlcNAc...) asparagine glycosylation sites follow: asparagine 450 and asparagine 454. The helical transmembrane segment at valine 517–threonine 536 threads the bilayer. The S-palmitoyl cysteine moiety is linked to residue cysteine 531. Topologically, residues arginine 537–lysine 626 are cytoplasmic. A phosphoserine mark is found at serine 545, serine 547, and serine 549. The interval leucine 577–lysine 626 is required for normal axon myelination in the central nervous system. The tract at residues arginine 581–lysine 608 is disordered.

Belongs to the immunoglobulin superfamily. SIGLEC (sialic acid binding Ig-like lectin) family. As to quaternary structure, monomer and homodimer. Interacts (via the first three N-terminal Ig-like domains) with RTN4R and RTN4RL2. Interacts with isoform 2 of BSG. N-glycosylated. Post-translationally, phosphorylated on tyrosine residues. In terms of processing, ubiquitinated, leading to proteasomal degradation. Detected in myelin. Detected in olfactory bulb and throughout the brain (at protein level). Detected in brain.

The protein localises to the cell membrane. It localises to the membrane raft. Functionally, adhesion molecule that mediates interactions between myelinating cells and neurons by binding to neuronal sialic acid-containing gangliosides and to the glycoproteins RTN4R and RTN4RL2. Not required for initial myelination, but seems to play a role in the maintenance of normal axon myelination. Protects motoneurons against apoptosis, also after injury; protection against apoptosis is probably mediated via interaction with neuronal RTN4R and RTN4RL2. Required to prevent degeneration of myelinated axons in adults; this probably depends on binding to gangliosides on the axon cell membrane. Negative regulator of neurite outgrowth; in dorsal root ganglion neurons the inhibition is mediated primarily via binding to neuronal RTN4R or RTN4RL2 and to a lesser degree via binding to neuronal gangliosides. In cerebellar granule cells the inhibition is mediated primarily via binding to neuronal gangliosides. In sensory neurons, inhibition of neurite extension depends only partially on RTN4R, RTN4RL2 and gangliosides. Inhibits axon longitudinal growth. Inhibits axon outgrowth by binding to RTN4R. Preferentially binds to alpha-2,3-linked sialic acid. Binds ganglioside Gt1b. In Rattus norvegicus (Rat), this protein is Myelin-associated glycoprotein (Mag).